A 695-amino-acid polypeptide reads, in one-letter code: Elongation factor G 2 (695 aa).

In terms of domain architecture, tr-type G spans Ser-5–Thr-280. GTP is bound by residues Ala-14–Thr-21, Asp-78–His-82, and Asn-132–Asp-135.

It belongs to the TRAFAC class translation factor GTPase superfamily. Classic translation factor GTPase family. EF-G/EF-2 subfamily.

The protein localises to the cytoplasm. Its function is as follows. Catalyzes the GTP-dependent ribosomal translocation step during translation elongation. During this step, the ribosome changes from the pre-translocational (PRE) to the post-translocational (POST) state as the newly formed A-site-bound peptidyl-tRNA and P-site-bound deacylated tRNA move to the P and E sites, respectively. Catalyzes the coordinated movement of the two tRNA molecules, the mRNA and conformational changes in the ribosome. The chain is Elongation factor G 2 from Photobacterium profundum (strain SS9).